A 467-amino-acid chain; its full sequence is Glutamine synthetase (467 aa).

Residues 11 to 95 (HDVKWIDLRF…IVCDIIEPST (85 aa)) enclose the GS beta-grasp domain. Residues 103–467 (PRAIARRAEE…PLEYDLYYSV (365 aa)) enclose the GS catalytic domain. The Mg(2+) site is built by Glu-128 and Glu-130. ATP is bound at residue Glu-206. Residues Glu-211 and Glu-219 each coordinate Mg(2+). L-glutamate contacts are provided by residues 263–264 (NG) and Gly-264. His-268 contacts Mg(2+). ATP contacts are provided by residues 270 to 272 (HMS) and Ser-272. Residues Arg-320, Glu-326, and Arg-338 each contribute to the L-glutamate site. ATP is bound by residues Arg-338, Arg-343, and Lys-351. Glu-356 is a Mg(2+) binding site. Residue Arg-358 participates in L-glutamate binding. O-AMP-tyrosine is present on Tyr-396.

Belongs to the glutamine synthetase family. Oligomer of 12 subunits arranged in the form of two hexameric ring. Mg(2+) is required as a cofactor.

It is found in the cytoplasm. The enzyme catalyses L-glutamate + NH4(+) + ATP = L-glutamine + ADP + phosphate + H(+). With respect to regulation, the activity of this enzyme could be controlled by adenylation under conditions of abundant glutamine. Catalyzes the ATP-dependent biosynthesis of glutamine from glutamate and ammonia. This chain is Glutamine synthetase, found in Azotobacter vinelandii.